We begin with the raw amino-acid sequence, 129 residues long: Small ribosomal subunit protein uS11 (129 aa).

Belongs to the universal ribosomal protein uS11 family. As to quaternary structure, part of the 30S ribosomal subunit. Interacts with proteins S7 and S18. Binds to IF-3.

Functionally, located on the platform of the 30S subunit, it bridges several disparate RNA helices of the 16S rRNA. Forms part of the Shine-Dalgarno cleft in the 70S ribosome. This is Small ribosomal subunit protein uS11 from Haemophilus influenzae (strain 86-028NP).